The sequence spans 1840 residues: Sodium channel protein type 4 subunit alpha (1840 aa).

Topologically, residues 1–131 (MASSSLPNLV…RVAIKVLIHA (131 aa)) are cytoplasmic. A compositionally biased stretch (basic and acidic residues) spans 36–60 (EARLQRNKQMEIEEPERKPRSDLEA). The segment at 36–63 (EARLQRNKQMEIEEPERKPRSDLEAGKN) is disordered. The stretch at 113–448 (LLSPFSIVRR…VVAMAYAEQN (336 aa)) is one I repeat. Residues 132–150 (LFSMFIMITILTNCVFMTM) form a helical membrane-spanning segment. The Extracellular segment spans residues 151–157 (SNPPSWS). The helical transmembrane segment at 158–178 (KHVEYTFTGIYTFESLIKMLA) threads the bilayer. Topologically, residues 179-192 (RGFCIDDFTFLRDP) are cytoplasmic. The helical transmembrane segment at 193 to 210 (WNWLDFSVITMAYVTEFV) threads the bilayer. The Extracellular segment spans residues 211–216 (DLGNIS). A helical transmembrane segment spans residues 217–233 (ALRTFRVLRALKTITVI). The Cytoplasmic portion of the chain corresponds to 234–252 (PGLKTIVGALIQSVKKLSD). The chain crosses the membrane as a helical span at residues 253–272 (VMILTVFCLSVFALVGLQLF). Over 273–385 (MGNLRQKCVR…PNYGYTSYDT (113 aa)) the chain is Extracellular. Cysteine 280 and cysteine 354 form a disulfide bridge. Residues asparagine 288, asparagine 291, asparagine 297, asparagine 303, asparagine 309, asparagine 315, asparagine 327, and asparagine 356 are each glycosylated (N-linked (GlcNAc...) asparagine). Residues cysteine 363 and cysteine 369 are joined by a disulfide bond. An intramembrane region (pore-forming) is located at residues 386–410 (FSWAFLALFRLMTQDYWENLFQLTL). The Extracellular segment spans residues 411-417 (RAAGKTY). The chain crosses the membrane as a helical span at residues 418–438 (MIFFVVIIFLGSFYLINLILA). Over 439–572 (VVAMAYAEQN…HIIYLIVMDP (134 aa)) the chain is Cytoplasmic. The interval 481 to 522 (AAQALESGEEADGDPTHNKDCNGSLDASGEKGPPRPSCSADS) is disordered. Phosphoserine is present on serine 487. One copy of the II repeat lies at 554-826 (CCAPWVKFKH…QIAIGRIKWG (273 aa)). Residues 573 to 591 (FVDLGITICIVLNTLFMAM) traverse the membrane as a helical segment. Topologically, residues 592–602 (EHYPMTEHFDN) are extracellular. The helical transmembrane segment at 603 to 622 (VLSVGNLVFTGIFTAEMVLK) threads the bilayer. The Cytoplasmic portion of the chain corresponds to 623 to 636 (LIAMDPYEYFQQGW). The chain crosses the membrane as a helical span at residues 637-656 (NIFDSFIVTLSLVELGLANV). Residues 657–658 (QG) lie on the Extracellular side of the membrane. A helical membrane pass occupies residues 659-676 (LSVLRSFRLLRVFKLAKS). At 677–692 (WPTLNMLIKIIGNSVG) the chain is on the cytoplasmic side. The helical transmembrane segment at 693-711 (ALGNLTLVLAIIVFIFAVV) threads the bilayer. Residues 712-740 (GMQLFGKSYKECVCKIASDCNLPRWHMND) are Extracellular-facing. A disulfide bond links cysteine 725 and cysteine 731. Residues 741-761 (FFHSFLIVFRILCGEWIETMW) constitute an intramembrane region (pore-forming). Topologically, residues 762 to 772 (DCMEVAGQAMC) are extracellular. Cysteine 763 and cysteine 772 form a disulfide bridge. Residues 773–791 (LTVFLMVMVIGNLVVLNLF) traverse the membrane as a helical segment. Residues 792-1025 (LALLLSSFSA…ACFKIVEHNW (234 aa)) lie on the Cytoplasmic side of the membrane. Disordered stretches follow at residues 854–884 (EPGG…LKDN) and 925–983 (DLEM…GEQP). Positions 868-884 (EDEKKEPPPEDKELKDN) are enriched in basic and acidic residues. 2 stretches are compositionally biased toward acidic residues: residues 925–940 (DLEM…FSEP) and 968–983 (EDPE…GEQP). The III repeat unit spans residues 1006-1319 (RGKMWWTLRR…KKYYNAMKKL (314 aa)). Residues 1026 to 1043 (FETFIVFMILLSSGALAF) traverse the membrane as a helical segment. The Extracellular portion of the chain corresponds to 1044–1056 (EDIYIEQRRVIRT). A helical transmembrane segment spans residues 1057-1075 (ILEYADKVFTYIFILEMLL). Over 1076–1089 (KWVAYGFKVYFTNA) the chain is Cytoplasmic. The helical transmembrane segment at 1090-1108 (WCWLDFLIVDVSIISLVAN) threads the bilayer. Residues 1109-1116 (WLGYSELG) lie on the Extracellular side of the membrane. The helical transmembrane segment at 1117-1135 (PIKSLRTLRALRPLRALSR) threads the bilayer. Residues 1136–1152 (FEGMRVVVNALLGAIPS) lie on the Cytoplasmic side of the membrane. A helical membrane pass occupies residues 1153 to 1172 (IMNVLLVCLIFWLIFSIMGV). The Extracellular segment spans residues 1173 to 1223 (NLFAGKFYYCVNTTTSERFDISVVNNKSESESLMYTGQVRWMNVKVNYDNV). Asparagine 1198 is a glycosylation site (N-linked (GlcNAc...) asparagine). Residues 1224–1245 (GLGYLSLLQVATFKGWMDIMYA) constitute an intramembrane region (pore-forming). The Extracellular portion of the chain corresponds to 1246 to 1262 (AVDSREKEEQPHYEVNL). The helical transmembrane segment at 1263–1284 (YMYLYFVIFIIFGSFFTLNLFI) threads the bilayer. Over 1285 to 1347 (GVIIDNFNQQ…MVYDFVTKQV (63 aa)) the chain is Cytoplasmic. Positions 1303–1305 (IFM) are important for rapid channel inactivation. One copy of the IV repeat lies at 1328–1626 (IPRPQNKIQG…WEKFDPDATQ (299 aa)). Residues 1348–1365 (FDISIMILICLNMVTMMV) form a helical membrane-spanning segment. Residues 1366–1376 (ETDDQSQLKVD) are Extracellular-facing. A helical membrane pass occupies residues 1377–1395 (ILYNINMVFIIIFTGECVL). At 1396–1407 (KMFALRHYYFTI) the chain is on the cytoplasmic side. A helical membrane pass occupies residues 1408–1425 (GWNIFDFVVVILSIVGLA). At 1426–1438 (LSDLIQKYFVSPT) the chain is on the extracellular side. A helical membrane pass occupies residues 1439–1455 (LFRVIRLARIGRVLRLI). Over 1456-1474 (RGAKGIRTLLFALMMSLPA) the chain is Cytoplasmic. The helical transmembrane segment at 1475–1492 (LFNIGLLLFLVMFIYSIF) threads the bilayer. The Extracellular portion of the chain corresponds to 1493-1514 (GMSNFAYVKKESGIDDMFNFET). An intramembrane region (pore-forming) is located at residues 1515-1537 (FGNSIICLFEITTSAGWDGLLNP). The Extracellular segment spans residues 1538-1567 (ILNSGPPDCDPTLENPGTNVRGDCGNPSIG). An intrachain disulfide couples cysteine 1546 to cysteine 1561. The chain crosses the membrane as a helical span at residues 1568-1590 (ICFFCSYIIISFLIVVNMYIAII). Residues 1591–1840 (LENFNVATEE…VRPGVKESLV (250 aa)) lie on the Cytoplasmic side of the membrane. The IQ domain maps to 1720–1749 (EEVCAIKIQRAYRRHLLQRSVKQASYMYRH). Residues 1775–1840 (HEKEGDGVQS…VRPGVKESLV (66 aa)) are disordered. Residues 1804–1813 (PTSSSDTALT) show a composition bias toward low complexity. Pro residues predominate over residues 1814–1824 (PSPPPLPPSSS).

The protein belongs to the sodium channel (TC 1.A.1.10) family. Nav1.4/SCN4A subfamily. As to quaternary structure, the Nav1.4 voltage-gated sodium channel consists of an ion-conducting alpha subunit SCN4A which is functional on its own and a regulatory beta subunit SCN1B. SCN1B strongly enhances the presence of SCN4A at the cell surface. SCN1B is also required for rapid channel inactivation and recovery after inactivation. It prevents the decrease of channel activity in response to repetitive, high-frequency depolarizations. Interacts with the syntrophins SNTA1, SNTB1 and SNTB2 (via PDZ domain); probably links SCN4A to the actin cytoskeleton and the extracellular matrix via the dystrophin-associated protein complex and regulates its localization in muscle cells. Interacts with TMEM233; probable regulator of the channel. As to expression, detected in skeletal muscle.

Its subcellular location is the cell membrane. The catalysed reaction is Na(+)(in) = Na(+)(out). Potently inhibited by tetrodotoxin and saxitoxin. Inhibited by the conotoxin GVIIJ. Pore-forming subunit of Nav1.4, a voltage-gated sodium (Nav) channel that directly mediates the depolarizing phase of action potentials in excitable membranes. Navs, also called VGSCs (voltage-gated sodium channels) or VDSCs (voltage-dependent sodium channels), operate by switching between closed and open conformations depending on the voltage difference across the membrane. In the open conformation they allow Na(+) ions to selectively pass through the pore, along their electrochemical gradient. The influx of Na+ ions provokes membrane depolarization, initiating the propagation of electrical signals throughout cells and tissues. Highly expressed in skeletal muscles, Nav1.4 generates the action potential crucial for muscle contraction. The chain is Sodium channel protein type 4 subunit alpha from Rattus norvegicus (Rat).